Consider the following 983-residue polypeptide: Ephrin type-A receptor 3 (983 aa).

The signal sequence occupies residues 1-20 (MDCHLSILVLLGCCVLSCSG). The Extracellular segment spans residues 21 to 540 (ELSPQPSNEV…SFSISGENSH (520 aa)). Residues 29–206 (EVNLLDSKTI…YFKKCPFTVK (178 aa)) form the Eph LBD domain. N-linked (GlcNAc...) asparagine glycosylation is found at asparagine 231, asparagine 336, asparagine 390, asparagine 403, and asparagine 492. Fibronectin type-III domains lie at 324–434 (PPSA…TNQA) and 435–530 (APSP…TSPD). Residues 541–564 (VVMIAISAAVAIIVLTVVTYVLVG) form a helical membrane-spanning segment. At 565–983 (RFCGYHKSKH…TQSKNGPVPV (419 aa)) the chain is on the cytoplasmic side. Phosphotyrosine; by autocatalysis occurs at positions 596 and 602. The 262-residue stretch at 621 to 882 (ISIDKVVGAG…QIVSILDKLI (262 aa)) folds into the Protein kinase domain. ATP contacts are provided by residues 628–633 (GAGEFG), lysine 653, and 700–706 (EYMENGS). Residue tyrosine 701 is modified to Phosphotyrosine; by autocatalysis. Aspartate 746 (proton acceptor) is an active-site residue. 750-751 (RN) is a binding site for ATP. Position 779 is a phosphotyrosine; by autocatalysis (tyrosine 779). Positions 911–975 (ATFHTTGDWL…ISTIKALETQ (65 aa)) constitute an SAM domain. Tyrosine 937 is modified (phosphotyrosine). Residues 981 to 983 (VPV) carry the PDZ-binding motif.

The protein belongs to the protein kinase superfamily. Tyr protein kinase family. Ephrin receptor subfamily. In terms of assembly, heterotetramer upon binding of the ligand. The heterotetramer is composed of an ephrin dimer and a receptor dimer. Oligomerization is probably required to induce biological responses. Forms a ternary EFNA5-EPHA3-ADAM10 complex mediating EFNA5 extracellular domain shedding by ADAM10 which regulates the EFNA5-EPHA3 complex internalization and function. Interacts (phosphorylated) with PTPN1; dephosphorylates EPHA3 and may regulate its trafficking and function. Interacts (phosphorylated) with CRK; mediates EFNA5-EPHA3 signaling through RHOA GTPase activation. Interacts with NCK1 (via SH2 domain); mediates EFNA5-EPHA3 signaling. Autophosphorylates upon activation by EFNA5. Phosphorylation on Tyr-602 mediates interaction with NCK1. Dephosphorylated by PTPN1. Greatest levels of expression occurring in the brain, also detected in testis. Expressed in myogenic progenitor cells.

The protein resides in the cell membrane. Its subcellular location is the secreted. The enzyme catalyses L-tyrosyl-[protein] + ATP = O-phospho-L-tyrosyl-[protein] + ADP + H(+). Receptor tyrosine kinase which binds promiscuously membrane-bound ephrin family ligands residing on adjacent cells, leading to contact-dependent bidirectional signaling into neighboring cells. The signaling pathway downstream of the receptor is referred to as forward signaling while the signaling pathway downstream of the ephrin ligand is referred to as reverse signaling. Highly promiscuous for ephrin-A ligands it binds preferentially EFNA5. Upon activation by EFNA5 regulates cell-cell adhesion, cytoskeletal organization and cell migration. Plays a role in cardiac cells migration and differentiation and regulates the formation of the atrioventricular canal and septum during development probably through activation by EFNA1. Involved in the retinotectal mapping of neurons. May also control the segregation but not the guidance of motor and sensory axons during neuromuscular circuit development. This Mus musculus (Mouse) protein is Ephrin type-A receptor 3 (Epha3).